A 325-amino-acid chain; its full sequence is NADH-quinone oxidoreductase subunit H (325 aa).

A run of 8 helical transmembrane segments spans residues Leu5–Tyr25, Phe75–Ile95, Val117–Gly137, Ile157–Leu177, Trp190–Thr210, Phe240–Phe260, Asp268–Val288, and Trp305–Val325.

Belongs to the complex I subunit 1 family. NDH-1 is composed of 14 different subunits. Subunits NuoA, H, J, K, L, M, N constitute the membrane sector of the complex.

It localises to the cell inner membrane. It catalyses the reaction a quinone + NADH + 5 H(+)(in) = a quinol + NAD(+) + 4 H(+)(out). Its function is as follows. NDH-1 shuttles electrons from NADH, via FMN and iron-sulfur (Fe-S) centers, to quinones in the respiratory chain. The immediate electron acceptor for the enzyme in this species is believed to be ubiquinone. Couples the redox reaction to proton translocation (for every two electrons transferred, four hydrogen ions are translocated across the cytoplasmic membrane), and thus conserves the redox energy in a proton gradient. This subunit may bind ubiquinone. This Protochlamydia amoebophila (strain UWE25) protein is NADH-quinone oxidoreductase subunit H.